The following is a 1383-amino-acid chain: MEARSRSAEELRRAELVEIIVETEAQTGVSGFNVAGGGKEGIFVRELREDSPAAKSLSLQEGDQLLSARVFFENFKYEDALRLLQCAEPYKVSFCLKRTVPTGDLALRPGTVSGYEMKGPRAKVAKLNIQSLSPVKKKKMVIGTLGTPADLAPVDVEFSFPKFSRLRRGLKADAVKGPVPAAPARRRLQLPRLRVREVAEEAQVARMAAAAPPSRKAKSEAEVATGAGFTAPQIELVGPRLPSAEVGVPKVSVPKGTPSTEAASGFALHLPTLGLGAPAAPAVEPPTTGIQVPQVELPTLPSLPTLPTLPCLDTQEGAAVVKVPTLDVAAPSVEVDLALPGAEVEAQGEVPEVALKMPRLSFPRFGVRGKEATEAKVVKGSPEAKAKGPRLRMPTFGLSLLESRPSGPEVAAESKLKLPTLKMPSFGISVAGPEVKAPKGPEVKLPKVPEIKLPKAPEAAIPDVQLPEVQLPKMSDMKLPKIPEMAVPDVHLPEVKLPKVPEMKVPEMKLPKIPEMAVPDVHLPDIQLPKVPEMKLPDMKLPKVPEMAVPDVHLPDIQLPKVPEMKLPDMKLPKVPEMAVPDVRIPEVQLPKVSEVKLPKIPDMAVPDVRLPELQLPKMSEVKLPKIPDMAVPDVRLPEVQLPKVSELKLPKVPEMTMPDIRLPEVQLPKVPDIKLPEIKLPKVPEMAVPDVPLPELQLPKVPQVPDVHLPKVPEMKLPKVPEAQRKSAGAEQAEKTEFSFKLPKMTVPKLGKVTKPGEAGIEVPDKLLILPCLQPEVGTEVARVGVPSLSLPSVELDLPGALGLEGQVQEAVSGKVEKPEGPRVAVGTGEAGFRVPSVEIVNPQLPTVEVKKEQLEMVEMKVKPTSKFSLPKFGLSGPKAVKAEVEGPGRATKLKVSKFAISLPRARAGTDADAKGAGEAGLLPALDLSIPQLSLDAQLPSGKVEVAGAESKPKGSRFALPKFGAKGRDSEADVLVAGEAELEGKGWGWDGKVKMPKLKMPSFGLSRGKEAEIQDGRVSPGEKLEAIAGQLKIPEVELVTPGAQETEKVTSGVKPSGLQVSTTRQVVAEGQEGAQRVSSLGISLPQVELASFGEAGPEIAAPSAEGTVGSRIQVPQVMLELPGTQVAGGDLLVGEGIFKMPTVTVPQLELDVGLGHEAQAGETAKSEGGLKLKLPTLGAGGKGEGAEAQSPEAQHTFHISLPDVELTSPVSSHAEYQVVEGDGDGGHKLKVRLPLFGLARAKEGIETGEKVKSPKLRLPRVGFSQSESASGEGSPSPEEEEEGSGEGASGRRGRVRVRLPRVGLASPSKGSKGQEGDAASKSPVGEKSPKFRFPRVSLSPKARSGSKDREEGGFRVRLPSVGFSETAAPGSARIEGTQAAAI.

A Phosphoserine modification is found at serine 7. The 84-residue stretch at 16–99 (LVEIIVETEA…YKVSFCLKRT (84 aa)) folds into the PDZ domain. The short motif at 70–84 (VFFENFKYEDALRLL) is the Nuclear export signal element. Serine 133 and serine 243 each carry phosphoserine. 46 tandem repeats follow at residues 432-436 (GPEVK), 440-444 (GPEVK), 448-452 (VPEIK), 456-460 (APEAA), 461-465 (IPDVQ), 466-470 (LPEVQ), 474-478 (MSDMK), 482-486 (IPEMA), 487-491 (VPDVH), 492-496 (LPEVK), 497-501 (LPKVP), 502-506 (EMKVP), 507-511 (EMKLP), 515-519 (EMAVP), 523-527 (LPDIQ), 531-535 (VPEMK), 536-540 (LPDMK), 544-548 (VPEMA), 549-553 (VPDVH), 554-558 (LPDIQ), 562-566 (VPEMK), 567-571 (LPDMK), 575-579 (VPEMA), 580-584 (VPDVR), 585-589 (IPEVQ), 593-597 (VSEVK), 601-605 (IPDMA), 606-610 (VPDVR), 611-615 (LPELQ), 619-623 (MSEVK), 627-631 (IPDMA), 632-636 (VPDVR), 637-641 (LPEVQ), 645-649 (VSELK), 653-657 (VPEMT), 658-662 (MPDIR), 663-667 (LPEVQ), 671-675 (VPDIK), 676-680 (LPEIK), 684-688 (VPEMA), 689-693 (VPDVP), 694-698 (LPELQ), 699-703 (LPKVP), 705-709 (VPDVH), 713-717 (VPEMK), and 718-722 (LPKVP). Residues 432–722 (GPEVKAPKGP…VPEMKLPKVP (291 aa)) form a 46 X 5 AA approximate tandem repeats of [LVMGIE]-[PSM]-[EDKA]-[LIVMA]-[AQKHPRT]; that may have a tripeptide spacer of [ALKD]-[IPV]-[KPH] region. Phosphoserine occurs at positions 838, 971, 1020, 1271, 1275, 1277, 1285, 1323, and 1329. Residues 1251 to 1383 (KVKSPKLRLP…RIEGTQAAAI (133 aa)) are disordered. Over residues 1267–1277 (SESASGEGSPS) the composition is skewed to low complexity. Residues 1346-1355 (GSKDREEGGF) are compositionally biased toward basic and acidic residues. The residue at position 1361 (serine 1361) is a Phosphoserine.

Belongs to the periaxin family. In terms of assembly, homodimer (via PDZ domain). Interacts with SCN10A. Found in a complex with SCN10A. Interacts with DRP2. Identified in a dystroglycan complex that contains at least PRX, DRP2, UTRN, DMD and DAG1. Detected in a complex composed of at least EZR, AHNAK, PPL and PRX. Identified in a complex with EZR, AHNAK, BFSP1, BFSP2, ANK2, PLEC, VIM and spectrin. In terms of processing, the N-terminus is blocked. Detected in sciatic nerve and in trigeminal nerve Schwann cells. Detected in myelinating Schwann cells in sciatic nerve (at protein level).

The protein localises to the nucleus. It localises to the cytoplasm. It is found in the cell membrane. The protein resides in the cell junction. Its function is as follows. Scaffolding protein that functions as part of a dystroglycan complex in Schwann cells, and as part of EZR and AHNAK-containing complexes in eye lens fiber cells. Required for the maintenance of the peripheral myelin sheath that is essential for normal transmission of nerve impulses and normal perception of sensory stimuli. Required for normal transport of MBP mRNA from the perinuclear to the paranodal regions. Required for normal remyelination after nerve injury. Required for normal elongation of Schwann cells and normal length of the internodes between the nodes of Ranvier. The demyelinated nodes of Ranvier permit saltatory transmission of nerve impulses; shorter internodes cause slower transmission of nerve impulses. Required for the formation of appositions between the abaxonal surface of the myelin sheath and the Schwann cell plasma membrane; the Schwann cell cytoplasm is restricted to regions between these appositions. Required for the formation of Cajal bands and of Schmidt-Lanterman incisures that correspond to short, cytoplasm-filled regions on myelinated nerves. Recruits DRP2 to the Schwann cell plasma membrane. Required for normal protein composition of the eye lens fiber cell plasma membrane and normal eye lens fiber cell morphology. The chain is Periaxin (Prx) from Rattus norvegicus (Rat).